The chain runs to 95 residues: Aspartyl/glutamyl-tRNA(Asn/Gln) amidotransferase subunit C (95 aa).

It belongs to the GatC family. Heterotrimer of A, B and C subunits.

The enzyme catalyses L-glutamyl-tRNA(Gln) + L-glutamine + ATP + H2O = L-glutaminyl-tRNA(Gln) + L-glutamate + ADP + phosphate + H(+). The catalysed reaction is L-aspartyl-tRNA(Asn) + L-glutamine + ATP + H2O = L-asparaginyl-tRNA(Asn) + L-glutamate + ADP + phosphate + 2 H(+). Its function is as follows. Allows the formation of correctly charged Asn-tRNA(Asn) or Gln-tRNA(Gln) through the transamidation of misacylated Asp-tRNA(Asn) or Glu-tRNA(Gln) in organisms which lack either or both of asparaginyl-tRNA or glutaminyl-tRNA synthetases. The reaction takes place in the presence of glutamine and ATP through an activated phospho-Asp-tRNA(Asn) or phospho-Glu-tRNA(Gln). In Ruegeria pomeroyi (strain ATCC 700808 / DSM 15171 / DSS-3) (Silicibacter pomeroyi), this protein is Aspartyl/glutamyl-tRNA(Asn/Gln) amidotransferase subunit C.